Here is a 69-residue protein sequence, read N- to C-terminus: Disintegrin EMF10A (69 aa).

Residues 1–66 (MNSANPCCDP…DCPRNPWKSE (66 aa)) enclose the Disintegrin domain. 4 cysteine pairs are disulfide-bonded: cysteine 7/cysteine 30, cysteine 21/cysteine 27, cysteine 26/cysteine 51, and cysteine 39/cysteine 58. The Cell attachment site motif lies at 43-45 (RGD).

This sequence belongs to the disintegrin family. Dimeric disintegrin subfamily. As to quaternary structure, heterodimer with EMF10B; disulfide-linked. Expressed by the venom gland.

The protein resides in the secreted. Extremely potent and selective inhibitor of integrin alpha-5/beta-1 (ITGA5/ITGB1). Partially inhibits adhesion of cells expressing alpha-IIb/beta-3 (ITGA2B/ITGB3), alpha-V/beta-3 (ITGAV/ITGB3), and alpha-4/beta-1 (ITGA4/ITGB1) to appropriate ligands only at concentration higher than 500 nM. Weakly inhibits ADP-induced platelet aggregation. The polypeptide is Disintegrin EMF10A (Eristicophis macmahoni (Leaf-nosed viper)).